A 125-amino-acid chain; its full sequence is MADLAKIEEQLSSLTLMQAAELVKMLEEKWGVSAAAPVPMAAASAPAAAEEAVAEKTDFEVVLTAVGGKKVEVIKVVREITGLGLIEAKKLVDEAPKAVKQSVKKAEAEEIKSKLEAAGAKVELK.

It belongs to the bacterial ribosomal protein bL12 family. In terms of assembly, homodimer. Part of the ribosomal stalk of the 50S ribosomal subunit. Forms a multimeric L10(L12)X complex, where L10 forms an elongated spine to which 2 to 4 L12 dimers bind in a sequential fashion. Binds GTP-bound translation factors.

In terms of biological role, forms part of the ribosomal stalk which helps the ribosome interact with GTP-bound translation factors. Is thus essential for accurate translation. The sequence is that of Large ribosomal subunit protein bL12 from Rickettsia canadensis (strain McKiel).